The chain runs to 109 residues: Nucleoid-associated protein VC_1055 (109 aa).

Residues 1–22 (MFGKGGMGNLMKQAQQMQERMQ) are disordered.

Belongs to the YbaB/EbfC family. Homodimer.

It localises to the cytoplasm. It is found in the nucleoid. Its function is as follows. Binds to DNA and alters its conformation. May be involved in regulation of gene expression, nucleoid organization and DNA protection. The chain is Nucleoid-associated protein VC_1055 from Vibrio cholerae serotype O1 (strain ATCC 39315 / El Tor Inaba N16961).